A 707-amino-acid polypeptide reads, in one-letter code: DNA topoisomerase 1 (707 aa).

The Toprim domain occupies 1 to 140; sequence MYAILAEKPS…IKRLWTSSMT (140 aa). A Topo IA-type catalytic domain is found at 157-596; sequence TLPLYYQAKA…HSKKLSSVLF (440 aa). Residues 199–204 form an interaction with DNA region; that stretch reads SLGRVQ. The active-site O-(5'-phospho-DNA)-tyrosine intermediate is the tyrosine 323.

This sequence belongs to the type IA topoisomerase family. Monomer.

The enzyme catalyses ATP-independent breakage of single-stranded DNA, followed by passage and rejoining.. Releases the supercoiling and torsional tension of DNA, which is introduced during the DNA replication and transcription, by transiently cleaving and rejoining one strand of the DNA duplex. Introduces a single-strand break via transesterification at a target site in duplex DNA. The scissile phosphodiester is attacked by the catalytic tyrosine of the enzyme, resulting in the formation of a DNA-(5'-phosphotyrosyl)-enzyme intermediate and the expulsion of a 3'-OH DNA strand. The free DNA strand then undergoes passage around the unbroken strand, thus removing DNA supercoils. Finally, in the religation step, the DNA 3'-OH attacks the covalent intermediate to expel the active-site tyrosine and restore the DNA phosphodiester backbone. This is DNA topoisomerase 1 (topA) from Alkalihalophilus pseudofirmus (strain ATCC BAA-2126 / JCM 17055 / OF4) (Bacillus pseudofirmus).